Reading from the N-terminus, the 115-residue chain is MAFALRFFTCLVLTVCIVASVDAAISCGTVAGSLAPCATYLSKGGLVPPSCCAGVKTLNSMAKTTPDRQQACRCIQSTAKSISGLNPSLASGLPGKCGVSIPYPISMSTNCNNIK.

Positions 1-23 (MAFALRFFTCLVLTVCIVASVDA) are cleaved as a signal peptide. Intrachain disulfides connect C27/C74, C37/C51, C52/C97, and C72/C111.

Belongs to the plant LTP family.

Functionally, plant non-specific lipid-transfer proteins transfer phospholipids as well as galactolipids across membranes. May play a role in wax or cutin deposition in the cell walls of expanding epidermal cells and certain secretory tissues. The sequence is that of Non-specific lipid-transfer protein 3 (LTP3) from Arabidopsis thaliana (Mouse-ear cress).